Reading from the N-terminus, the 509-residue chain is Probable malate:quinone oxidoreductase (509 aa).

Residues 490 to 509 (LGLNEKEPVSGASEKELVYS) form a disordered region. The segment covering 493-509 (NEKEPVSGASEKELVYS) has biased composition (basic and acidic residues).

This sequence belongs to the MQO family. Requires FAD as cofactor.

The catalysed reaction is (S)-malate + a quinone = a quinol + oxaloacetate. It participates in carbohydrate metabolism; tricarboxylic acid cycle; oxaloacetate from (S)-malate (quinone route): step 1/1. In Geobacillus sp. (strain WCH70), this protein is Probable malate:quinone oxidoreductase.